A 146-amino-acid chain; its full sequence is Hemoglobin subunit beta (146 aa).

Valine 1 carries the N-acetylvaline modification. The Globin domain occupies 2–146 (HLTGEEKAAV…VANALAHKYH (145 aa)). Threonine 12 is modified (phosphothreonine). Serine 44 is modified (phosphoserine). An N6-acetyllysine modification is found at lysine 59. Histidine 63 is a binding site for heme b. Lysine 82 is subject to N6-acetyllysine. Histidine 92 serves as a coordination point for heme b. Residue cysteine 93 is modified to S-nitrosocysteine. Lysine 144 bears the N6-acetyllysine mark.

This sequence belongs to the globin family. As to quaternary structure, heterotetramer of two alpha chains and two beta chains. As to expression, red blood cells.

Its function is as follows. Involved in oxygen transport from the lung to the various peripheral tissues. The chain is Hemoglobin subunit beta (HBB) from Martes foina (Beech marten).